The chain runs to 282 residues: Ribonuclease P protein subunit p38 (282 aa).

2 disordered regions span residues 1–21 and 61–103; these read MAAA…PLPV and EDRK…QASG. A2 carries the post-translational modification N-acetylalanine. At S12 the chain carries Phosphoserine. Residues 88–97 are compositionally biased toward basic and acidic residues; it reads EDLKKEKPKG. Residues S226 and S235 each carry the phosphoserine modification. Positions 262-282 are disordered; sequence KLIPNPNKIRKPPKSKRTASK. Residues 269-282 are compositionally biased toward basic residues; the sequence is KIRKPPKSKRTASK.

The protein belongs to the eukaryotic ribosomal protein eL8 family. Component of nuclear RNase P and RNase MRP ribonucleoproteins. RNase P consists of a catalytic RNA moiety and about 10 protein subunits; POP1, POP4, POP5, POP7, RPP14, RPP21, RPP25, RPP30, RPP38 and RPP40. Within the RNase P complex, POP1, POP7 and RPP25 form the 'finger' subcomplex, POP5, RPP14, RPP40 and homodimeric RPP30 form the 'palm' subcomplex, and RPP21, POP4 and RPP38 form the 'wrist' subcomplex. All subunits of the RNase P complex interact with the catalytic RNA. Several subunits of RNase P are also part of the RNase MRP complex. RNase MRP consists of a catalytic RNA moiety and about 8 protein subunits; POP1, POP7, RPP25, RPP30, RPP38, RPP40 and possibly also POP4 and POP5.

It is found in the nucleus. It localises to the nucleolus. Functionally, component of ribonuclease P, a ribonucleoprotein complex that generates mature tRNA molecules by cleaving their 5'-ends. Also a component of the MRP ribonuclease complex, which cleaves pre-rRNA sequences. The chain is Ribonuclease P protein subunit p38 (RPP38) from Bos taurus (Bovine).